Here is a 67-residue protein sequence, read N- to C-terminus: Small ribosomal subunit protein bS21 (67 aa).

Residues glutamate 37–arginine 52 show a composition bias toward basic and acidic residues. Positions glutamate 37–phenylalanine 67 are disordered.

This sequence belongs to the bacterial ribosomal protein bS21 family.

This Gluconacetobacter diazotrophicus (strain ATCC 49037 / DSM 5601 / CCUG 37298 / CIP 103539 / LMG 7603 / PAl5) protein is Small ribosomal subunit protein bS21.